The sequence spans 564 residues: Major facilitator superfamily transporter MPN_076 (564 aa).

Transmembrane regions (helical) follow at residues methionine 1–aspartate 21, isoleucine 65–tyrosine 85, valine 89–leucine 109, isoleucine 176–leucine 196, asparagine 220–valine 240, valine 249–phenylalanine 269, methionine 306–tryptophan 326, alanine 358–phenylalanine 378, isoleucine 404–valine 424, alanine 425–leucine 445, valine 457–isoleucine 477, and glycine 501–valine 521.

It belongs to the major facilitator superfamily.

It localises to the cell membrane. This chain is Major facilitator superfamily transporter MPN_076, found in Mycoplasma pneumoniae (strain ATCC 29342 / M129 / Subtype 1) (Mycoplasmoides pneumoniae).